The chain runs to 729 residues: Translation initiation factor IF-2 (729 aa).

A disordered region spans residues Gln20–Pro141. A compositionally biased stretch (gly residues) spans Ala22 to Gly91. Residues Gly92 to Arg108 are compositionally biased toward basic and acidic residues. Residues Ser112–Gly127 show a composition bias toward low complexity. Residues Pro229–Glu396 form the tr-type G domain. Residues Gly238–Thr245 form a G1 region. Gly238–Thr245 lines the GTP pocket. The interval Gly263–His267 is G2. Positions Asp284–Gly287 are G3. GTP contacts are provided by residues Asp284–His288 and Asn338–Asp341. The G4 stretch occupies residues Asn338–Asp341. The tract at residues Ser374 to Lys376 is G5.

It belongs to the TRAFAC class translation factor GTPase superfamily. Classic translation factor GTPase family. IF-2 subfamily.

It is found in the cytoplasm. One of the essential components for the initiation of protein synthesis. Protects formylmethionyl-tRNA from spontaneous hydrolysis and promotes its binding to the 30S ribosomal subunits. Also involved in the hydrolysis of GTP during the formation of the 70S ribosomal complex. The protein is Translation initiation factor IF-2 of Roseiflexus sp. (strain RS-1).